The following is a 65-amino-acid chain: Large ribosomal subunit protein bL35 (65 aa).

The interval 1–22 (MPKMKTKSSAKKRFKVTGSGKI) is disordered.

The protein belongs to the bacterial ribosomal protein bL35 family.

In Flavobacterium psychrophilum (strain ATCC 49511 / DSM 21280 / CIP 103535 / JIP02/86), this protein is Large ribosomal subunit protein bL35.